A 418-amino-acid polypeptide reads, in one-letter code: Serine hydroxymethyltransferase (418 aa).

Residues leucine 121 and 125–127 (GHL) each bind (6S)-5,6,7,8-tetrahydrofolate. Lysine 230 carries the post-translational modification N6-(pyridoxal phosphate)lysine. (6S)-5,6,7,8-tetrahydrofolate contacts are provided by residues glutamate 246 and 355–357 (SPF).

The protein belongs to the SHMT family. Homodimer. Requires pyridoxal 5'-phosphate as cofactor.

It localises to the cytoplasm. The catalysed reaction is (6R)-5,10-methylene-5,6,7,8-tetrahydrofolate + glycine + H2O = (6S)-5,6,7,8-tetrahydrofolate + L-serine. Its pathway is one-carbon metabolism; tetrahydrofolate interconversion. It functions in the pathway amino-acid biosynthesis; glycine biosynthesis; glycine from L-serine: step 1/1. In terms of biological role, catalyzes the reversible interconversion of serine and glycine with tetrahydrofolate (THF) serving as the one-carbon carrier. This reaction serves as the major source of one-carbon groups required for the biosynthesis of purines, thymidylate, methionine, and other important biomolecules. Also exhibits THF-independent aldolase activity toward beta-hydroxyamino acids, producing glycine and aldehydes, via a retro-aldol mechanism. This Streptococcus pneumoniae serotype 2 (strain D39 / NCTC 7466) protein is Serine hydroxymethyltransferase.